A 239-amino-acid chain; its full sequence is Probable transcriptional regulatory protein BCQ_0605 (239 aa).

It belongs to the TACO1 family. YeeN subfamily.

It is found in the cytoplasm. This is Probable transcriptional regulatory protein BCQ_0605 from Bacillus cereus (strain Q1).